Consider the following 290-residue polypeptide: Pyridoxal kinase PdxY (290 aa).

Substrate-binding positions include serine 12 and 47–48 (TQ). Residues aspartate 114, glutamate 151, lysine 184, and 211–214 (RPLL) contribute to the ATP site. A substrate-binding site is contributed by aspartate 225.

This sequence belongs to the pyridoxine kinase family. PdxY subfamily. In terms of assembly, homodimer. Mg(2+) is required as a cofactor.

It catalyses the reaction pyridoxal + ATP = pyridoxal 5'-phosphate + ADP + H(+). Its pathway is cofactor metabolism; pyridoxal 5'-phosphate salvage; pyridoxal 5'-phosphate from pyridoxal: step 1/1. Its function is as follows. Pyridoxal kinase involved in the salvage pathway of pyridoxal 5'-phosphate (PLP). Catalyzes the phosphorylation of pyridoxal to PLP. This chain is Pyridoxal kinase PdxY, found in Pseudomonas entomophila (strain L48).